Reading from the N-terminus, the 307-residue chain is Elongation factor Ts (307 aa).

The involved in Mg(2+) ion dislocation from EF-Tu stretch occupies residues 80-83 (TDFV).

It belongs to the EF-Ts family.

The protein localises to the cytoplasm. Functionally, associates with the EF-Tu.GDP complex and induces the exchange of GDP to GTP. It remains bound to the aminoacyl-tRNA.EF-Tu.GTP complex up to the GTP hydrolysis stage on the ribosome. The polypeptide is Elongation factor Ts (tsf) (Zymomonas mobilis subsp. mobilis (strain ATCC 31821 / ZM4 / CP4)).